A 166-amino-acid polypeptide reads, in one-letter code: Phosphopantetheine adenylyltransferase (166 aa).

Ser-10 provides a ligand contact to substrate. Residues 10–11 and His-18 each bind ATP; that span reads SF. Residues Lys-42, Ala-79, and Arg-93 each contribute to the substrate site. Residues 94–96, Glu-104, and 129–135 contribute to the ATP site; these read GLR and VRPITAT.

It belongs to the bacterial CoaD family. In terms of assembly, homohexamer. Requires Mg(2+) as cofactor.

Its subcellular location is the cytoplasm. The catalysed reaction is (R)-4'-phosphopantetheine + ATP + H(+) = 3'-dephospho-CoA + diphosphate. It participates in cofactor biosynthesis; coenzyme A biosynthesis; CoA from (R)-pantothenate: step 4/5. In terms of biological role, reversibly transfers an adenylyl group from ATP to 4'-phosphopantetheine, yielding dephospho-CoA (dPCoA) and pyrophosphate. The polypeptide is Phosphopantetheine adenylyltransferase (Methylobacterium sp. (strain 4-46)).